The following is a 299-amino-acid chain: Protoheme IX farnesyltransferase 1 (299 aa).

9 consecutive transmembrane segments (helical) span residues 25 to 45, 47 to 67, 95 to 115, 119 to 139, 147 to 167, 173 to 193, 217 to 237, 243 to 263, and 279 to 299; these read VVVL…RAGV, WSVL…AAVV, LPAL…LLAF, LTAW…TGFL, IVIG…AVSG, PLLL…ALAI, ALHI…PYAI, LYLA…WVLY, and IGYL…LLNL.

This sequence belongs to the UbiA prenyltransferase family. Protoheme IX farnesyltransferase subfamily.

The protein localises to the cell inner membrane. The catalysed reaction is heme b + (2E,6E)-farnesyl diphosphate + H2O = Fe(II)-heme o + diphosphate. It functions in the pathway porphyrin-containing compound metabolism; heme O biosynthesis; heme O from protoheme: step 1/1. Its function is as follows. Converts heme B (protoheme IX) to heme O by substitution of the vinyl group on carbon 2 of heme B porphyrin ring with a hydroxyethyl farnesyl side group. The protein is Protoheme IX farnesyltransferase 1 of Pseudomonas entomophila (strain L48).